The primary structure comprises 118 residues: UPF0295 protein BC_0520 (118 aa).

The next 2 membrane-spanning stretches (helical) occupy residues isoleucine 12–phenylalanine 32 and phenylalanine 43–methionine 63.

Belongs to the UPF0295 family.

The protein localises to the cell membrane. The sequence is that of UPF0295 protein BC_0520 from Bacillus cereus (strain ATCC 14579 / DSM 31 / CCUG 7414 / JCM 2152 / NBRC 15305 / NCIMB 9373 / NCTC 2599 / NRRL B-3711).